The chain runs to 793 residues: Alanine--tRNA ligase, mitochondrial (793 aa).

Residues Arg88, Trp187, and 224-226 (IWN) each bind ATP. Asn226 and Asp249 together coordinate L-alanine. Gly253 provides a ligand contact to ATP. Zn(2+) contacts are provided by His594, His598, Cys706, and His710.

Belongs to the class-II aminoacyl-tRNA synthetase family. In terms of assembly, monomer. Zn(2+) is required as a cofactor.

Its subcellular location is the mitochondrion. The enzyme catalyses tRNA(Ala) + L-alanine + ATP = L-alanyl-tRNA(Ala) + AMP + diphosphate. Its function is as follows. Catalyzes the attachment of alanine to tRNA(Ala) in a two-step reaction: alanine is first activated by ATP to form Ala-AMP and then transferred to the acceptor end of tRNA(Ala). Also edits incorrectly charged tRNA(Ala) via its editing domain. This Caenorhabditis elegans protein is Alanine--tRNA ligase, mitochondrial.